Reading from the N-terminus, the 343-residue chain is Uroporphyrinogen decarboxylase (343 aa).

Substrate-binding positions include arginine 25–arginine 29, phenylalanine 44, aspartate 75, tyrosine 150, serine 205, and histidine 320.

The protein belongs to the uroporphyrinogen decarboxylase family. In terms of assembly, homodimer.

It localises to the cytoplasm. The catalysed reaction is uroporphyrinogen III + 4 H(+) = coproporphyrinogen III + 4 CO2. The protein operates within porphyrin-containing compound metabolism; protoporphyrin-IX biosynthesis; coproporphyrinogen-III from 5-aminolevulinate: step 4/4. Its function is as follows. Catalyzes the decarboxylation of four acetate groups of uroporphyrinogen-III to yield coproporphyrinogen-III. This Mesorhizobium japonicum (strain LMG 29417 / CECT 9101 / MAFF 303099) (Mesorhizobium loti (strain MAFF 303099)) protein is Uroporphyrinogen decarboxylase.